A 235-amino-acid polypeptide reads, in one-letter code: Large ribosomal subunit protein uL1 (235 aa).

It belongs to the universal ribosomal protein uL1 family. Part of the 50S ribosomal subunit.

In terms of biological role, binds directly to 23S rRNA. The L1 stalk is quite mobile in the ribosome, and is involved in E site tRNA release. Protein L1 is also a translational repressor protein, it controls the translation of the L11 operon by binding to its mRNA. In Nitratidesulfovibrio vulgaris (strain DSM 19637 / Miyazaki F) (Desulfovibrio vulgaris), this protein is Large ribosomal subunit protein uL1.